The chain runs to 274 residues: uncharacterized protein (274 aa).

It is found in the plastid. Its subcellular location is the chloroplast. This is an uncharacterized protein from Euglena gracilis.